The chain runs to 791 residues: Centrosomal protein of 89 kDa (791 aa).

Residues 27–203 are disordered; it reads APKPAVPRTP…HTQQKDVKHS (177 aa). Pro residues predominate over residues 30–45; the sequence is PAVPRTPPPRSPNPSP. The residue at position 50 (Ser-50) is a Phosphoserine. Low complexity predominate over residues 50–62; it reads SALAAAILATTLT. A compositionally biased stretch (basic and acidic residues) spans 75-89; sequence SRSESDASDIEKDSF. The span at 94-107 shows a compositional bias: polar residues; sequence ATTSELRLRQSWQN. Residues 137–161 show a composition bias toward basic and acidic residues; sequence RESESTWKDVGDGRDATYTVPHRDQ. The span at 181 to 190 shows a compositional bias: low complexity; sequence SDSSSSSSSS. Coiled coils occupy residues 252–291, 370–598, and 670–737; these read SANQ…TEKA, LLAY…MGKE, and HRLK…SLLQ.

The protein resides in the cytoplasm. It is found in the cytosol. Its subcellular location is the cytoskeleton. It localises to the microtubule organizing center. The protein localises to the centrosome. The protein resides in the spindle pole. It is found in the centriole. Its subcellular location is the mitochondrion intermembrane space. Its function is as follows. Required for ciliogenesis. Also plays a role in mitochondrial metabolism where it may modulate complex IV activity. The polypeptide is Centrosomal protein of 89 kDa (Cep89) (Mus musculus (Mouse)).